Here is a 53-residue protein sequence, read N- to C-terminus: UPF0391 membrane protein YPTS_0599 (53 aa).

Transmembrane regions (helical) follow at residues 4–24 (WGII…GGLA) and 27–47 (AAWA…ISLF).

It belongs to the UPF0391 family.

It localises to the cell membrane. This is UPF0391 membrane protein YPTS_0599 from Yersinia pseudotuberculosis serotype IB (strain PB1/+).